Consider the following 186-residue polypeptide: Large ribosomal subunit protein uL5 (186 aa).

It belongs to the universal ribosomal protein uL5 family. In terms of assembly, part of the 50S ribosomal subunit; part of the 5S rRNA/L5/L18/L25 subcomplex. Contacts the 5S rRNA and the P site tRNA. Forms a bridge to the 30S subunit in the 70S ribosome.

This is one of the proteins that bind and probably mediate the attachment of the 5S RNA into the large ribosomal subunit, where it forms part of the central protuberance. In the 70S ribosome it contacts protein S13 of the 30S subunit (bridge B1b), connecting the 2 subunits; this bridge is implicated in subunit movement. Contacts the P site tRNA; the 5S rRNA and some of its associated proteins might help stabilize positioning of ribosome-bound tRNAs. The chain is Large ribosomal subunit protein uL5 from Cereibacter sphaeroides (strain ATCC 17029 / ATH 2.4.9) (Rhodobacter sphaeroides).